The chain runs to 571 residues: Urease subunit alpha (571 aa).

A Urease domain is found at 133 to 571 (GGIDTHVHFI…LPLAQRYFLF (439 aa)). Positions 138, 140, and 221 each coordinate Ni(2+). Lysine 221 carries the N6-carboxylysine modification. Substrate is bound at residue histidine 223. Residues histidine 250 and histidine 276 each contribute to the Ni(2+) site. The active-site Proton donor is the histidine 324. A Ni(2+)-binding site is contributed by aspartate 364.

The protein belongs to the metallo-dependent hydrolases superfamily. Urease alpha subunit family. In terms of assembly, heterotrimer of UreA (gamma), UreB (beta) and UreC (alpha) subunits. Three heterotrimers associate to form the active enzyme. Requires Ni cation as cofactor. Carboxylation allows a single lysine to coordinate two nickel ions.

The protein localises to the cytoplasm. It carries out the reaction urea + 2 H2O + H(+) = hydrogencarbonate + 2 NH4(+). The protein operates within nitrogen metabolism; urea degradation; CO(2) and NH(3) from urea (urease route): step 1/1. The chain is Urease subunit alpha from Staphylococcus carnosus (strain TM300).